Reading from the N-terminus, the 254-residue chain is Bowman-Birk type bran trypsin inhibitor (254 aa).

A signal peptide spans Met1–Ala22. The propeptide occupies His23–Ser118. Repeats lie at residues Lys46–Glu120, Arg121–Pro187, and Arg188–Arg251. 10 disulfide bridges follow: Cys51/Cys248, Cys125/Cys185, Cys126/Cys143, Cys152/Cys159, Cys156/Cys172, Cys193/Cys248, Cys194/Cys209, Cys199/Cys207, Cys216/Cys223, and Cys220/Cys236. Positions Ala252–Asn254 are excised as a propeptide.

It belongs to the Bowman-Birk serine protease inhibitor family. Expressed in roots, leaves and flowers.

In Oryza sativa subsp. indica (Rice), this protein is Bowman-Birk type bran trypsin inhibitor (RBBI3.3).